The primary structure comprises 447 residues: Phosphoglucosamine mutase (447 aa).

The active-site Phosphoserine intermediate is the serine 88. The Mg(2+) site is built by serine 88, aspartate 231, aspartate 233, and aspartate 235. Serine 88 bears the Phosphoserine mark.

This sequence belongs to the phosphohexose mutase family. Requires Mg(2+) as cofactor. Post-translationally, activated by phosphorylation.

The catalysed reaction is alpha-D-glucosamine 1-phosphate = D-glucosamine 6-phosphate. Catalyzes the conversion of glucosamine-6-phosphate to glucosamine-1-phosphate. The polypeptide is Phosphoglucosamine mutase (Methanococcus maripaludis (strain C7 / ATCC BAA-1331)).